The following is a 176-amino-acid chain: Small capsomere-interacting protein (176 aa).

Disordered stretches follow at residues 75-109 (DKRQRASVAGAGAHAHLGGSSATPVQQAQAAASAG) and 148-176 (ASAAAAVDTGSGGGGQPHDTAPRGARKKQ). A compositionally biased stretch (low complexity) spans 80–109 (ASVAGAGAHAHLGGSSATPVQQAQAAASAG).

The protein belongs to the herpesviridae small capsomere-interacting protein family. As to quaternary structure, interacts with the major capsid protein/MCP.

The protein localises to the virion. It localises to the host nucleus. Participates in the assembly of the infectious particles by decorating the outer surface of the capsid shell and thus forming a layer between the capsid and the tegument. Complexes composed of the major capsid protein and small capsomere-interacting protein/SCP assemble together in the host cytoplasm and are translocated to the nucleus, where they accumulate and participate in capsid assembly. This is Small capsomere-interacting protein from Epstein-Barr virus (strain B95-8) (HHV-4).